A 370-amino-acid chain; its full sequence is NADH-quinone oxidoreductase subunit D (370 aa).

Belongs to the complex I 49 kDa subunit family. As to quaternary structure, NDH-1 is composed of 14 different subunits. Subunits NuoB, C, D, E, F, and G constitute the peripheral sector of the complex.

Its subcellular location is the cell membrane. It carries out the reaction a quinone + NADH + 5 H(+)(in) = a quinol + NAD(+) + 4 H(+)(out). Its function is as follows. NDH-1 shuttles electrons from NADH, via FMN and iron-sulfur (Fe-S) centers, to quinones in the respiratory chain. The immediate electron acceptor for the enzyme in this species is believed to be a menaquinone. Couples the redox reaction to proton translocation (for every two electrons transferred, four hydrogen ions are translocated across the cytoplasmic membrane), and thus conserves the redox energy in a proton gradient. This chain is NADH-quinone oxidoreductase subunit D, found in Desulfitobacterium hafniense (strain Y51).